We begin with the raw amino-acid sequence, 412 residues long: Polyferredoxin protein MvhB (412 aa).

4Fe-4S ferredoxin-type domains lie at 2 to 29 (IVIN…VKPE), 30 to 57 (DVIY…HEDI), 66 to 95 (KKIT…LVND), 96 to 127 (GKAS…IEGV), 138 to 166 (DKPI…LPKY), 168 to 197 (ESIE…ISGK), 207 to 236 (ENFT…PKSD), 237 to 265 (LTVS…LEVK), 275 to 304 (EGIV…VVSP), 311 to 344 (GLKK…LVEV), 356 to 385 (NRIQ…LTDD), and 386 to 412 (EKLP…LLIK). Positions 9, 12, 15, and 19 each coordinate [4Fe-4S] cluster. 36 residues coordinate [4Fe-4S] cluster: C75, C78, C81, C85, C107, C110, C113, C117, C146, C149, C152, C156, C177, C180, C183, C187, C216, C219, C222, C226, C245, C248, C251, C255, C284, C287, C290, C294, C324, C327, C330, C334, C365, C368, C371, and C375.

It depends on [4Fe-4S] cluster as a cofactor.

This is Polyferredoxin protein MvhB (mvhB) from Methanothermus fervidus.